The following is a 579-amino-acid chain: MFS-type transporter olcL (579 aa).

Polar residues predominate over residues Met1 to Thr24. Residues Met1–Asp75 form a disordered region. The span at Val25 to Thr35 shows a compositional bias: basic and acidic residues. The span at Ser36–Gln54 shows a compositional bias: polar residues. Residue Asn45 is glycosylated (N-linked (GlcNAc...) asparagine). Helical transmembrane passes span Leu85–Ile105, Gly121–Phe141, Ala159–Ile179, Ile183–Val203, Leu214–Thr234, Trp241–Phe261, Leu282–Gly302, Ser310–Val330, and Leu355–Phe375. The N-linked (GlcNAc...) asparagine glycan is linked to Asn380. Helical transmembrane passes span Leu388–Val408, Ile411–Leu431, Phe439–Leu459, Ile479–Phe501, and Phe553–Ile573.

This sequence belongs to the major facilitator superfamily. TCR/Tet family.

Its subcellular location is the peroxisome membrane. In terms of biological role, MFS-type transporter; part of the gene cluster that mediates the biosynthesis of 15-deoxyoxalicine B. The first step of the pathway is the synthesis of nicotinyl-CoA from nicotinic acid by the nicotinic acid-CoA ligase olcI. Nicotinyl-CoA is then a substrate of polyketide synthase olcA to produce 4-hydroxy-6-(3-pyridinyl)-2H-pyran-2-one (HPPO) which is further prenylated by the polyprenyl transferase olcH to yield geranylgeranyl-HPPO. Geranylgeranyl pyrophosphate is provided by the cluster-specific geranylgeranyl pyrophosphate synthase olcC. The FAD-dependent monooxygenase olcE catalyzes the epoxidation of geranylgeranyl-HPPO and the terpene cyclase olcD catalyzes the cyclization of the terpenoid component, resulting in the formation of the tricyclic terpene moiety seen in predecaturin E. The cytochrome P450 monooxygenase then catalyzes the allylic oxidation of predecaturin E, which is followed by spirocylization with concomitant loss of one molecule of water to form decaturin E. Decaturin E is the substrate of the cytochrome P450 monooxygenase olcJ which hydroxylates it at the C-29 position to form decaturin F. The short-chain dehydrogenase/reductase olcF may catalyze the oxidation of decaturin F to generate the 29-hydroxyl-27-one intermediate, and subsequent hemiacetal formation probably leads to the formation of decaturin C. The dioxygenase olcK may be a peroxisomal enzyme that catalyzes the hydroxylation of decaturin C into decaturin A once decaturin C is shuttled into the peroxisome by the MFS transporter olcL. Finally the cytochrome P450 monooxygenase olcB catalyzes the oxidative rearrangement to yield 15-deoxyoxalicine B. In the absence of olcJ, decaturin E may be shunted to a pathway in which it is oxidized to a ketone, possibly by olcF, to form decaturin D, which undergoes further allylic oxidation to yield decaturin G. Moreover, in the absence of oclK or oclL, oclB can convert decaturin C into 15-deoxyoxalicine A. The sequence is that of MFS-type transporter olcL from Penicillium canescens.